A 251-amino-acid polypeptide reads, in one-letter code: uncharacterized protein (251 aa).

A run of 4 helical transmembrane segments spans residues 56 to 76 (LAVVIAQLTIGVLGNSLTLVA), 104 to 124 (IITVGITNVILFLLFVAFLLT), 184 to 204 (HGFVYHFIAYFVLVSSLLIIV), and 208 to 228 (YLIADVITTYATSLLILANIS).

Its subcellular location is the membrane. This is an uncharacterized protein from Caenorhabditis elegans.